We begin with the raw amino-acid sequence, 296 residues long: MNNNVFHFPVLLDAICKLIEDLPVKSDLIYIDSTLGEGAHAKAILEKYDFLSLVGIERDSQILERAKQFLLIFKDRITYFNDWFDNFFANYPLNVKANFILVDLGISMFHYKDSKKGFSFLEDEPLDMRLCSSSCSISAAEIVNTFSKYDLESLIYNLSNEHYSRRISKAIVEYRKIKKIQTTKELQSIINKVYPFSKVKINPATKTFQALRIYVNDELARLKRSLPLWVENLAKDGILAIITFHSIEDRIVKDFFRSLSCDLYVKISKKPIIPSSDEIKKNKPSRSAKLRAVKKI.

S-adenosyl-L-methionine is bound by residues 38–40 (GAH), Glu-57, Phe-88, Asp-103, and His-110.

Belongs to the methyltransferase superfamily. RsmH family.

It localises to the cytoplasm. The enzyme catalyses cytidine(1402) in 16S rRNA + S-adenosyl-L-methionine = N(4)-methylcytidine(1402) in 16S rRNA + S-adenosyl-L-homocysteine + H(+). In terms of biological role, specifically methylates the N4 position of cytidine in position 1402 (C1402) of 16S rRNA. This Borreliella afzelii (strain PKo) (Borrelia afzelii) protein is Ribosomal RNA small subunit methyltransferase H.